A 545-amino-acid chain; its full sequence is Mitogen-activated protein kinase kinase kinase mom-4 (545 aa).

Positions 1–21 (MDTSPHSKPSSSSASQSSHSP) are enriched in low complexity. The disordered stretch occupies residues 1 to 35 (MDTSPHSKPSSSSASQSSHSPSPAPVTAPRKTRDS). The Protein kinase domain occupies 53–308 (NLNSHQLGRG…AECLQYFTAL (256 aa)). ATP contacts are provided by residues 59–67 (LGRGTYGIV) and lysine 86. The active-site Proton acceptor is the aspartate 178. Residues 316-444 (NVPLADANTN…PIDDRRDSNE (129 aa)) form a disordered region. Composition is skewed to polar residues over residues 352-369 (NGRT…QAVN) and 396-411 (ASSS…QSEA).

The protein belongs to the protein kinase superfamily. STE Ser/Thr protein kinase family. MAP kinase kinase kinase subfamily. Interacts with, and is activated by, tap-1. Mg(2+) serves as cofactor.

It carries out the reaction L-seryl-[protein] + ATP = O-phospho-L-seryl-[protein] + ADP + H(+). The catalysed reaction is L-threonyl-[protein] + ATP = O-phospho-L-threonyl-[protein] + ADP + H(+). Its function is as follows. Part of the Wnt signaling pathway essential for the specification of the mesodermal cell fate in early embryos. Stimulates the wrm-1/lit-1-dependent phosphorylation of pop-1 and plays a role in the initial nuclear accumulation of wrm-1. The sequence is that of Mitogen-activated protein kinase kinase kinase mom-4 from Caenorhabditis briggsae.